The primary structure comprises 351 residues: Small ribosomal subunit biogenesis GTPase RsgA (351 aa).

Residues 1 to 12 (MAKHKLSKGQQR) are compositionally biased toward basic residues. The segment at 1–37 (MAKHKLSKGQQRRVRENHQRRLKKQDNKPEMDDNQLG) is disordered. Residues 13 to 31 (RVRENHQRRLKKQDNKPEM) show a composition bias toward basic and acidic residues. Residues 112-274 (YYDGIKPIAA…VIDSPGVREF (163 aa)) form the CP-type G domain. GTP is bound by residues 160-163 (NKID) and 214-222 (GQSGVGKSS). Positions 298, 303, 305, and 311 each coordinate Zn(2+).

This sequence belongs to the TRAFAC class YlqF/YawG GTPase family. RsgA subfamily. As to quaternary structure, monomer. Associates with 30S ribosomal subunit, binds 16S rRNA. It depends on Zn(2+) as a cofactor.

It localises to the cytoplasm. In terms of biological role, one of several proteins that assist in the late maturation steps of the functional core of the 30S ribosomal subunit. Helps release RbfA from mature subunits. May play a role in the assembly of ribosomal proteins into the subunit. Circularly permuted GTPase that catalyzes slow GTP hydrolysis, GTPase activity is stimulated by the 30S ribosomal subunit. This is Small ribosomal subunit biogenesis GTPase RsgA from Photorhabdus laumondii subsp. laumondii (strain DSM 15139 / CIP 105565 / TT01) (Photorhabdus luminescens subsp. laumondii).